The chain runs to 114 residues: Histone H3-7 (114 aa).

The segment covering 1–17 (NTGGKAPRKHIAHKQAK) has biased composition (basic residues). The interval 1-32 (NTGGKAPRKHIAHKQAKKSSAAAATGGVKKPH) is disordered. Residues 18-28 (KSSAAAATGGV) are compositionally biased toward low complexity.

This sequence belongs to the histone H3 family. In terms of assembly, the nucleosome is a histone octamer containing two molecules each of H2A, H2B, H3 and H4 assembled in one H3-H4 heterotetramer and two H2A-H2B heterodimers. The octamer wraps approximately 147 bp of DNA.

Its subcellular location is the nucleus. It localises to the chromosome. Core component of nucleosome. Nucleosomes wrap and compact DNA into chromatin, limiting DNA accessibility to the cellular machineries which require DNA as a template. Histones thereby play a central role in transcription regulation, DNA repair, DNA replication and chromosomal stability. DNA accessibility is regulated via a complex set of post-translational modifications of histones, also called histone code, and nucleosome remodeling. The chain is Histone H3-7 (H3-7) from Stylonychia lemnae (Ciliate).